A 110-amino-acid chain; its full sequence is Small ribosomal subunit protein bS16 (110 aa).

Positions 82-103 are enriched in basic and acidic residues; that stretch reads VKKREARNNPEKAVPRKERKAQ. The tract at residues 82–110 is disordered; that stretch reads VKKREARNNPEKAVPRKERKAQAEAAAKG.

Belongs to the bacterial ribosomal protein bS16 family.

The chain is Small ribosomal subunit protein bS16 from Bradyrhizobium sp. (strain ORS 278).